The following is a 275-amino-acid chain: Tryptophan synthase alpha chain (275 aa).

Active-site proton acceptor residues include E49 and D60.

Belongs to the TrpA family. In terms of assembly, tetramer of two alpha and two beta chains.

The catalysed reaction is (1S,2R)-1-C-(indol-3-yl)glycerol 3-phosphate + L-serine = D-glyceraldehyde 3-phosphate + L-tryptophan + H2O. It participates in amino-acid biosynthesis; L-tryptophan biosynthesis; L-tryptophan from chorismate: step 5/5. In terms of biological role, the alpha subunit is responsible for the aldol cleavage of indoleglycerol phosphate to indole and glyceraldehyde 3-phosphate. This Nitrosomonas europaea (strain ATCC 19718 / CIP 103999 / KCTC 2705 / NBRC 14298) protein is Tryptophan synthase alpha chain.